The sequence spans 311 residues: Probable manganese-dependent inorganic pyrophosphatase (311 aa).

Residues His9, Asp13, Asp15, Asp75, His97, and Asp149 each coordinate Mn(2+).

This sequence belongs to the PPase class C family. Mn(2+) is required as a cofactor.

Its subcellular location is the cytoplasm. The enzyme catalyses diphosphate + H2O = 2 phosphate + H(+). The protein is Probable manganese-dependent inorganic pyrophosphatase of Lactobacillus johnsonii (strain CNCM I-12250 / La1 / NCC 533).